Consider the following 422-residue polypeptide: Tryptophan synthase beta chain (422 aa).

K111 carries the post-translational modification N6-(pyridoxal phosphate)lysine.

It belongs to the TrpB family. As to quaternary structure, tetramer of two alpha and two beta chains. Pyridoxal 5'-phosphate is required as a cofactor.

The enzyme catalyses (1S,2R)-1-C-(indol-3-yl)glycerol 3-phosphate + L-serine = D-glyceraldehyde 3-phosphate + L-tryptophan + H2O. It functions in the pathway amino-acid biosynthesis; L-tryptophan biosynthesis; L-tryptophan from chorismate: step 5/5. Its function is as follows. The beta subunit is responsible for the synthesis of L-tryptophan from indole and L-serine. This chain is Tryptophan synthase beta chain, found in Pseudothermotoga lettingae (strain ATCC BAA-301 / DSM 14385 / NBRC 107922 / TMO) (Thermotoga lettingae).